The chain runs to 340 residues: Arginine N-succinyltransferase subunit beta (340 aa).

It belongs to the succinylarginine dihydrolase family. In terms of assembly, heterotetramer of two alpha and two beta subunits.

The catalysed reaction is succinyl-CoA + L-arginine = N(2)-succinyl-L-arginine + CoA + H(+). It participates in amino-acid degradation; L-arginine degradation via AST pathway; L-glutamate and succinate from L-arginine: step 1/5. This Pseudomonas aeruginosa (strain ATCC 15692 / DSM 22644 / CIP 104116 / JCM 14847 / LMG 12228 / 1C / PRS 101 / PAO1) protein is Arginine N-succinyltransferase subunit beta (aruG).